Consider the following 494-residue polypeptide: Probable cytosol aminopeptidase (494 aa).

Residues Lys264 and Asp269 each coordinate Mn(2+). Lys276 is a catalytic residue. Asp287, Asp346, and Glu348 together coordinate Mn(2+). Arg350 is a catalytic residue.

This sequence belongs to the peptidase M17 family. The cofactor is Mn(2+).

It localises to the cytoplasm. It carries out the reaction Release of an N-terminal amino acid, Xaa-|-Yaa-, in which Xaa is preferably Leu, but may be other amino acids including Pro although not Arg or Lys, and Yaa may be Pro. Amino acid amides and methyl esters are also readily hydrolyzed, but rates on arylamides are exceedingly low.. The catalysed reaction is Release of an N-terminal amino acid, preferentially leucine, but not glutamic or aspartic acids.. In terms of biological role, presumably involved in the processing and regular turnover of intracellular proteins. Catalyzes the removal of unsubstituted N-terminal amino acids from various peptides. The polypeptide is Probable cytosol aminopeptidase (pepA) (Pasteurella multocida (strain Pm70)).